The sequence spans 259 residues: DNA utilization protein HofM (259 aa).

Required for the use of extracellular DNA as a nutrient. This Escherichia coli (strain K12) protein is DNA utilization protein HofM (hofM).